Consider the following 205-residue polypeptide: StAR-related lipid transfer protein 4 (205 aa).

The START domain occupies 1 to 205 (MEGLSDVASF…NFYGDLRKAL (205 aa)).

The catalysed reaction is cholesterol(in) = cholesterol(out). Functionally, involved in the intracellular transport of cholesterol. Binds cholesterol or other sterols. This is StAR-related lipid transfer protein 4 (STARD4) from Homo sapiens (Human).